The chain runs to 134 residues: MHCLECGLVYIVSGLKVPEKISVRVFVNRIEHPFTHWVKLNAGELLREDEEIILDKVKTGYGSPFVITSLQIGVRRVPSALAEELDTIWARPLNEITFAKRRKIRQKHPMSFENITSTAGTSTASEYLEVVDES.

The C4-type; atypical zinc finger occupies 3–36; that stretch reads CLECGLVYIVSGLKVPEKISVRVFVNRIEHPFTH.

In terms of assembly, interacts with the general archaeal transcription factors TBPs.

Functionally, involved in nitrogen regulation. Enhances the transcription of the nitrogen fixation (nif) operon under nitrogen-limited conditions. Acts by binding to the nifH promoter region. In Methanosarcina mazei (strain ATCC BAA-159 / DSM 3647 / Goe1 / Go1 / JCM 11833 / OCM 88) (Methanosarcina frisia), this protein is Nif-regulating protein A.